The chain runs to 136 residues: Large ribosomal subunit protein uL16 (136 aa).

Belongs to the universal ribosomal protein uL16 family. In terms of assembly, part of the 50S ribosomal subunit.

Binds 23S rRNA and is also seen to make contacts with the A and possibly P site tRNAs. This is Large ribosomal subunit protein uL16 from Rickettsia prowazekii (strain Madrid E).